The following is a 171-amino-acid chain: Myosin regulatory light chain 12A (171 aa).

Threonine 18 carries the phosphothreonine; by MLCK modification. A Phosphoserine; by MLCK modification is found at serine 19. EF-hand domains are found at residues 28–63 (SQIQ…LGKN), 97–132 (DPED…MGDR), and 133–168 (FTDE…GAKD). Positions 41, 43, 45, and 52 each coordinate Ca(2+).

In terms of assembly, myosin is a hexamer of 2 heavy chains and 4 light chains. In terms of processing, phosphorylation increases the actin-activated myosin ATPase activity and thereby regulates the contractile activity. It is required to generate the driving force in the migration of the cells but not necessary for localization of myosin-2 at the leading edge.

In terms of biological role, myosin regulatory subunit that plays an important role in regulation of both smooth muscle and nonmuscle cell contractile activity via its phosphorylation. Implicated in cytokinesis, receptor capping, and cell locomotion. This Homo sapiens (Human) protein is Myosin regulatory light chain 12A (MYL12A).